The following is a 441-amino-acid chain: Ribulose bisphosphate carboxylase large chain (441 aa).

Residues asparagine 89 and threonine 139 each contribute to the substrate site. Residue lysine 141 is the Proton acceptor of the active site. Residue lysine 143 coordinates substrate. The Mg(2+) site is built by lysine 167, aspartate 169, and glutamate 170. Lysine 167 is subject to N6-carboxylysine. The active-site Proton acceptor is the histidine 260. 3 residues coordinate substrate: arginine 261, histidine 293, and serine 345.

This sequence belongs to the RuBisCO large chain family. Type I subfamily. Heterohexadecamer of 8 large chains and 8 small chains; disulfide-linked. The disulfide link is formed within the large subunit homodimers. Mg(2+) is required as a cofactor. Post-translationally, the disulfide bond which can form in the large chain dimeric partners within the hexadecamer appears to be associated with oxidative stress and protein turnover.

It localises to the plastid. The protein localises to the chloroplast. It catalyses the reaction 2 (2R)-3-phosphoglycerate + 2 H(+) = D-ribulose 1,5-bisphosphate + CO2 + H2O. The enzyme catalyses D-ribulose 1,5-bisphosphate + O2 = 2-phosphoglycolate + (2R)-3-phosphoglycerate + 2 H(+). RuBisCO catalyzes two reactions: the carboxylation of D-ribulose 1,5-bisphosphate, the primary event in carbon dioxide fixation, as well as the oxidative fragmentation of the pentose substrate in the photorespiration process. Both reactions occur simultaneously and in competition at the same active site. This Viola sororia (Woolly blue violet) protein is Ribulose bisphosphate carboxylase large chain.